Reading from the N-terminus, the 240-residue chain is Probable phosphatase Athe_0620 (240 aa).

9 residues coordinate Zn(2+): His8, His10, His16, His41, Glu74, His102, His132, Asp192, and His194.

The protein belongs to the PHP family. Zn(2+) is required as a cofactor.

In Caldicellulosiruptor bescii (strain ATCC BAA-1888 / DSM 6725 / KCTC 15123 / Z-1320) (Anaerocellum thermophilum), this protein is Probable phosphatase Athe_0620.